The following is a 312-amino-acid chain: Glyoxylate/hydroxypyruvate reductase A (312 aa).

Arginine 227 is a catalytic residue. Histidine 275 (proton donor) is an active-site residue.

The protein belongs to the D-isomer specific 2-hydroxyacid dehydrogenase family. GhrA subfamily.

The protein localises to the cytoplasm. It carries out the reaction glycolate + NADP(+) = glyoxylate + NADPH + H(+). It catalyses the reaction (R)-glycerate + NAD(+) = 3-hydroxypyruvate + NADH + H(+). The catalysed reaction is (R)-glycerate + NADP(+) = 3-hydroxypyruvate + NADPH + H(+). Its function is as follows. Catalyzes the NADPH-dependent reduction of glyoxylate and hydroxypyruvate into glycolate and glycerate, respectively. This Shigella boydii serotype 18 (strain CDC 3083-94 / BS512) protein is Glyoxylate/hydroxypyruvate reductase A.